A 154-amino-acid chain; its full sequence is Keratin-associated protein 9-9 (154 aa).

A run of 14 repeats spans residues 8 to 12 (CCQPT), 13 to 17 (CCRTT), 18 to 22 (CCRTT), 37 to 41 (CCQPS), 42 to 46 (CCVSS), 51 to 55 (CCRPA), 56 to 60 (CCQNT), 61 to 65 (CCRTT), 66 to 70 (CCQPT), 75 to 79 (CCGQT), 124 to 128 (CCRPA), 129 to 133 (CCETT), 134 to 137 (CCRT), and 148 to 152 (CCQPS). The segment at 8–152 (CCQPTCCRTT…TCVSSCCQPS (145 aa)) is 14 X 5 AA repeats of C-C-[RQVGE]-[SPSTNQ]-[TASL].

This sequence belongs to the KRTAP type 9 family. Interacts with hair keratins.

In the hair cortex, hair keratin intermediate filaments are embedded in an interfilamentous matrix, consisting of hair keratin-associated proteins (KRTAP), which are essential for the formation of a rigid and resistant hair shaft through their extensive disulfide bond cross-linking with abundant cysteine residues of hair keratins. The matrix proteins include the high-sulfur and high-glycine-tyrosine keratins. The sequence is that of Keratin-associated protein 9-9 (KRTAP9-9) from Homo sapiens (Human).